Here is a 377-residue protein sequence, read N- to C-terminus: Succinyl-diaminopimelate desuccinylase (377 aa).

His67 provides a ligand contact to Zn(2+). The active site involves Asp69. Asp100 provides a ligand contact to Zn(2+). Glu134 (proton acceptor) is an active-site residue. Zn(2+)-binding residues include Glu135, Glu163, and His349.

This sequence belongs to the peptidase M20A family. DapE subfamily. As to quaternary structure, homodimer. Requires Zn(2+) as cofactor. Co(2+) serves as cofactor.

It catalyses the reaction N-succinyl-(2S,6S)-2,6-diaminopimelate + H2O = (2S,6S)-2,6-diaminopimelate + succinate. The protein operates within amino-acid biosynthesis; L-lysine biosynthesis via DAP pathway; LL-2,6-diaminopimelate from (S)-tetrahydrodipicolinate (succinylase route): step 3/3. Its function is as follows. Catalyzes the hydrolysis of N-succinyl-L,L-diaminopimelic acid (SDAP), forming succinate and LL-2,6-diaminopimelate (DAP), an intermediate involved in the bacterial biosynthesis of lysine and meso-diaminopimelic acid, an essential component of bacterial cell walls. The protein is Succinyl-diaminopimelate desuccinylase of Shewanella frigidimarina (strain NCIMB 400).